A 538-amino-acid chain; its full sequence is Xylosidase/arabinosidase 43B (538 aa).

The active-site Proton donor is Glu-367.

This sequence belongs to the glycosyl hydrolase 43 family.

It carries out the reaction Hydrolysis of (1-&gt;4)-beta-D-xylans, to remove successive D-xylose residues from the non-reducing termini.. The catalysed reaction is Hydrolysis of terminal non-reducing alpha-L-arabinofuranoside residues in alpha-L-arabinosides.. Activity is inhibited by Ag(+), Li(+), Cu(2+), Cr(3+), Co(3+), Ni(2+), Mg(2+), Zn(2+), EDTA, SDS and beta-mercaptoethanol; but not by Mn(2+), Pb(2+), Ca(2+) and Fe(3+). Its function is as follows. Bifunctional beta-xylosidase/alpha-L-arabinosidases with a low level of xylanase activity. Is most active on 4-nitrophenyl beta-D-xylopyranoside (pNPX) (defined as 100%), moderate on p-nitrophenyl-alpha-L-arabinofuranoside (pNPA) (56.6%), and weak on beechwood xylan (5.7%) and birchwood xylan (2.7%). Is able to attack xylooligosacchardies with degrees of polymerisation of 2-5, releasing the amounts of reducing sugars in the order of xylopentose &gt; xylotetraose &gt; xylotriose &gt; xylobiose, i.e. the rate of xylose released from xylooligosacchardies increased with the chain length. No activity was detected in the presence of carboxymethyl cellulose-sodium (CMC-Na), sugar beet arabinan, AZCL-arabinan (debranched), 4-nitrophenyl a-D - galactopyranoside, 2-nitrophenyl beta-D-galactopyranoside, and 4-nitrophenyl alpha-D-glucopyranoside. In Humicola insolens (Soft-rot fungus), this protein is Xylosidase/arabinosidase 43B.